The sequence spans 645 residues: ATP-dependent zinc metalloprotease FtsH 1 (645 aa).

The Cytoplasmic segment spans residues 1–6 (MRSTQK). Residues 7 to 27 (TLALWFFLIIMAVFLFQAYES) form a helical membrane-spanning segment. Residues 28-110 (KQQKAIADFN…NYERADNGGF (83 aa)) are Periplasmic-facing. Residues 111-131 (FQSLLVNWLPLILIVAMFLFI) traverse the membrane as a helical segment. Over 132 to 645 (MRQIQAGGGK…PVGNTGPVTI (514 aa)) the chain is Cytoplasmic. 203 to 210 (GSPGTGKT) serves as a coordination point for ATP. A Zn(2+)-binding site is contributed by histidine 425. Glutamate 426 is a catalytic residue. Residues histidine 429 and aspartate 501 each coordinate Zn(2+).

The protein in the central section; belongs to the AAA ATPase family. In the C-terminal section; belongs to the peptidase M41 family. In terms of assembly, homohexamer. Requires Zn(2+) as cofactor.

The protein localises to the cell inner membrane. In terms of biological role, acts as a processive, ATP-dependent zinc metallopeptidase for both cytoplasmic and membrane proteins. Plays a role in the quality control of integral membrane proteins. The polypeptide is ATP-dependent zinc metalloprotease FtsH 1 (Bdellovibrio bacteriovorus (strain ATCC 15356 / DSM 50701 / NCIMB 9529 / HD100)).